The primary structure comprises 509 residues: Maturase K (509 aa).

The protein belongs to the intron maturase 2 family. MatK subfamily.

The protein resides in the plastid. Its subcellular location is the chloroplast. Functionally, usually encoded in the trnK tRNA gene intron. Probably assists in splicing its own and other chloroplast group II introns. The chain is Maturase K from Solanum bulbocastanum (Wild potato).